The sequence spans 146 residues: Large ribosomal subunit protein uL15 (146 aa).

Basic and acidic residues predominate over residues 1–13 (MKLNELHPSEGSR). Residues 1–56 (MKLNELHPSEGSRHARKRVGRGTSSGFGKTSGRGQKGQHARSGGNTRLGFEGGQMP) form a disordered region. Residues 23–35 (TSSGFGKTSGRGQ) are compositionally biased toward gly residues.

The protein belongs to the universal ribosomal protein uL15 family. Part of the 50S ribosomal subunit.

In terms of biological role, binds to the 23S rRNA. In Lactobacillus delbrueckii subsp. bulgaricus (strain ATCC 11842 / DSM 20081 / BCRC 10696 / JCM 1002 / NBRC 13953 / NCIMB 11778 / NCTC 12712 / WDCM 00102 / Lb 14), this protein is Large ribosomal subunit protein uL15.